Reading from the N-terminus, the 815-residue chain is MAEEQTALSLSWVFGASAHVKHGVVNLSDGYTDKICYLAANTAVIYDKRLRRQLFLQGHTSPITCIVTTEDRSHVVTADTGPEALLVVWNVRTGLPTRTVQQPHRHGVSTMDMSADGQWLATVSAADPESGEQEVSLWSMAALLTPPEAAPPGQGPLRPLVTTLVPAGDVQHSIRFSPNNPAELISNGRRRVYFWSWAPGSPRFQYYSPPLRSRDFKQSVGDFVSSVFVPGTTQALTATTDGDLVVWDEQGIAAQVGTSATDRRAIKLMRIHNCPITLLATVGDFIVSGGEDGYVRFFDPLLRIVAWFEDLAAGPVTSVAFSAVLPDRLAHADAADTLNRFMVPDFVVATRNSRIVSVQSASFEEYDADRRRGSSVLDSLLADVVDLAAHPTRAEFAVLGRDGGLQRWDSIAHCLLGGRAFERQVGACLTYSRDGSLLVVGFGSGHLHILNADDCSDLYVMRNTAAGLVRVAVSNTGKHIAAADENHQLLLYAYLPYKHTMRWEYVGRCRSHHGPIASVVFGESPSGQTRLLSVGGDGRVVEYDLAASSVAAGVQVASFYDFPPGGGAPTSLSFAPPLAYFQAFAADTHLLVSGADGTVASWDINTAPLERSATAAEGAGGEARWAAVLGDPDLLREMRDYFVYAQIKTQGEDALEPRDVPGTVPVDLVPDLMRSAGFYPSESDIDNLLHHVQYMAHSRNMESLEVVTLADLLCLYINHRPLFNVTHADIVAAFRELGGRGDPGSCVPKLSREQLLSLLQSTGEPMSGEELTAALAALTGAHTPEKSMPVSVAAEQFSADVLGFDTTEAGAEAAT.

WD repeat units lie at residues 58–99, 103–148, 166–205, 218–257, 271–308, 379–418, 420–460, 463–502, 511–553, and 573–612; these read GHTS…PTRT, PHRH…TPPE, PAGD…PRFQ, QSVG…AQVG, IHNC…VAWF, SLLA…LLGG, AFER…DLYV, NTAA…HTMR, SHHG…VAAG, and SFAP…LERS.

Identified in a spoke-associated complex containing CFAP61, CFAP91 and CFAP251; the complex is associated with the radial spokes in the axoneme. The complex associates with Calmodulin; the association is calcium sensitive.

Its subcellular location is the cytoplasm. The protein localises to the cytoskeleton. It localises to the flagellum axoneme. As component of a spoke-associated complex, regulates flagellar dynein activity by mediating regulatory signals between the radial spokes and dynein arms. In Chlamydomonas reinhardtii (Chlamydomonas smithii), this protein is Cilia- and flagella-associated protein 251.